We begin with the raw amino-acid sequence, 356 residues long: DNA integrity scanning protein DisA (356 aa).

A DAC domain is found at 7-147; sequence NKNMLYALKM…EKYVVEDISK (141 aa). ATP is bound by residues Gly-74, Leu-92, and 105 to 109; that span reads TRHRT.

The protein belongs to the DisA family. Homooctamer. It depends on Mg(2+) as a cofactor.

It carries out the reaction 2 ATP = 3',3'-c-di-AMP + 2 diphosphate. Functionally, participates in a DNA-damage check-point that is active prior to asymmetric division when DNA is damaged. DisA forms globular foci that rapidly scan along the chromosomes during sporulation, searching for lesions. When a lesion is present, DisA pauses at the lesion site. This triggers a cellular response that culminates in a temporary block in sporulation initiation. Also has diadenylate cyclase activity, catalyzing the condensation of 2 ATP molecules into cyclic di-AMP (c-di-AMP). c-di-AMP acts as a signaling molecule that couples DNA integrity with progression of sporulation. The rise in c-di-AMP level generated by DisA while scanning the chromosome, operates as a positive signal that advances sporulation; upon encountering a lesion, the DisA focus arrests at the damaged site and halts c-di-AMP synthesis. The protein is DNA integrity scanning protein DisA of Clostridioides difficile (strain 630) (Peptoclostridium difficile).